We begin with the raw amino-acid sequence, 148 residues long: Helix-loop-helix protein 14 (148 aa).

3 disordered regions span residues 1-21 (MAKKNQVARNERERKRVHQVN), 63-83 (DPQQPSVSSSTPDYTMNNSNN), and 112-132 (GDVSHNFNSPTSSVSSSSYSP). The tract at residues 4–17 (KNQVARNERERKRV) is basic motif. The bHLH domain occupies 4-56 (KNQVARNERERKRVHQVNHGFDVLRNRLQPKNHTKKWSKADTLREAVKYIQQL). The helix-loop-helix motif stretch occupies residues 18 to 56 (HQVNHGFDVLRNRLQPKNHTKKWSKADTLREAVKYIQQL). The segment covering 63–78 (DPQQPSVSSSTPDYTM) has biased composition (polar residues). Positions 120 to 132 (SPTSSVSSSSYSP) are enriched in low complexity.

It is found in the nucleus. In terms of biological role, probable transcription factor, involved in determining neuroblast cell fate, morphogenesis and aspects of terminal differentiation in both left/right symmetric and asymmetric neuronal lineages. The sequence is that of Helix-loop-helix protein 14 from Caenorhabditis elegans.